Here is a 148-residue protein sequence, read N- to C-terminus: Large ribosomal subunit protein bL9 (148 aa).

Belongs to the bacterial ribosomal protein bL9 family.

Its function is as follows. Binds to the 23S rRNA. The chain is Large ribosomal subunit protein bL9 from Bacillus thuringiensis subsp. konkukian (strain 97-27).